The following is an 88-amino-acid chain: Small ribosomal subunit protein bS20 (88 aa).

The segment at 1–36 (MANTSSAKKATRKIARRTAVNKSRRTQMRGSVRTVE) is disordered.

This sequence belongs to the bacterial ribosomal protein bS20 family.

In terms of biological role, binds directly to 16S ribosomal RNA. In Rhodopseudomonas palustris (strain HaA2), this protein is Small ribosomal subunit protein bS20.